A 466-amino-acid chain; its full sequence is Histidinol dehydrogenase, chloroplastic (466 aa).

A chloroplast-targeting transit peptide spans 1-30 (MSLNLSRLSLLSSPRISISTHAPRKGYVCC). Residues Y155, Q217, and N240 each coordinate NAD(+). Residues S266, Q288, and H291 each contribute to the substrate site. The Zn(2+) site is built by Q288 and H291. Active-site proton acceptor residues include E356 and H357. 4 residues coordinate substrate: H357, D390, E444, and H449. D390 provides a ligand contact to Zn(2+). H449 is a Zn(2+) binding site.

The protein belongs to the histidinol dehydrogenase family. Zn(2+) is required as a cofactor.

Its subcellular location is the plastid. It is found in the chloroplast. The enzyme catalyses L-histidinol + 2 NAD(+) + H2O = L-histidine + 2 NADH + 3 H(+). It functions in the pathway amino-acid biosynthesis; L-histidine biosynthesis; L-histidine from 5-phospho-alpha-D-ribose 1-diphosphate: step 9/9. In terms of biological role, catalyzes the sequential NAD-dependent oxidations of L-histidinol to L-histidinaldehyde and then to L-histidine. This Arabidopsis thaliana (Mouse-ear cress) protein is Histidinol dehydrogenase, chloroplastic (HISN8).